A 266-amino-acid polypeptide reads, in one-letter code: Large ribosomal subunit protein eL8 (266 aa).

Basic residues predominate over residues 1–11 (MPKGKKAKGKK). The disordered stretch occupies residues 1–21 (MPKGKKAKGKKVAPAPSVAKK).

It belongs to the eukaryotic ribosomal protein eL8 family. As to quaternary structure, component of the large ribosomal subunit.

It is found in the cytoplasm. Its function is as follows. Component of the large ribosomal subunit. The ribosome is a large ribonucleoprotein complex responsible for the synthesis of proteins in the cell. The protein is Large ribosomal subunit protein eL8 (rpl7a) of Ictalurus punctatus (Channel catfish).